Reading from the N-terminus, the 112-residue chain is MVTRVGSGFSVQRVWLLLVIVVVLCGSVTQQASAWFTNDECPGVMGNRDLYEKVAWVCNDCANIFRNNDVGVMCKKDCFHTMDFLWCVYATERHGEIDQFRKWVSILRAGRK.

Positions Met-1–Gln-31 are cleaved as a signal peptide. Cystine bridges form between Cys-41–Cys-78, Cys-58–Cys-74, and Cys-61–Cys-87. Alanine amide is present on Ala-109.

Produced in the eyestalk X-organ sinus gland complex of male and female lobsters.

The protein localises to the secreted. Its function is as follows. Inhibits vitellogenesis in female animals. Plays a prominent role in the regulation of reproduction/molting processes. The sequence is that of Gonad-inhibiting hormone from Homarus americanus (American lobster).